We begin with the raw amino-acid sequence, 198 residues long: Ribosome maturation factor RimP (198 aa).

This sequence belongs to the RimP family.

Its subcellular location is the cytoplasm. Functionally, required for maturation of 30S ribosomal subunits. In Agrobacterium fabrum (strain C58 / ATCC 33970) (Agrobacterium tumefaciens (strain C58)), this protein is Ribosome maturation factor RimP.